Consider the following 516-residue polypeptide: Cysteine--tRNA ligase (516 aa).

Cys-32 is a Zn(2+) binding site. Residues 34–44 (PTVYMYAHIGN) carry the 'HIGH' region motif. Cys-230, His-255, and Glu-259 together coordinate Zn(2+). The short motif at 287–291 (KMSKS) is the 'KMSKS' region element. Lys-290 provides a ligand contact to ATP.

The protein belongs to the class-I aminoacyl-tRNA synthetase family. As to quaternary structure, monomer. Zn(2+) is required as a cofactor.

The protein localises to the cytoplasm. It catalyses the reaction tRNA(Cys) + L-cysteine + ATP = L-cysteinyl-tRNA(Cys) + AMP + diphosphate. This Salinibacter ruber (strain DSM 13855 / M31) protein is Cysteine--tRNA ligase.